A 148-amino-acid chain; its full sequence is Large ribosomal subunit protein bL9 (148 aa).

This sequence belongs to the bacterial ribosomal protein bL9 family.

Its function is as follows. Binds to the 23S rRNA. This is Large ribosomal subunit protein bL9 from Prosthecochloris aestuarii (strain DSM 271 / SK 413).